Reading from the N-terminus, the 236-residue chain is 3-oxoacyl-[acyl-carrier-protein] reductase (236 aa).

Methionine 1 bears the N-acetylmethionine mark. NADP(+) contacts are provided by residues serine 11–isoleucine 14 and arginine 34–asparagine 35. Residue lysine 40 is modified to N6-acetyllysine. Residues aspartate 56 and alanine 83–glycine 85 contribute to the NADP(+) site. Lysine 96 is modified (N6-acetyllysine). Position 134 (serine 134) interacts with substrate. NADP(+) is bound by residues tyrosine 147, lysine 151, and isoleucine 180–threonine 182. Tyrosine 147 serves as the catalytic Proton acceptor. Lysine 194 carries the post-translational modification N6-acetyllysine.

This sequence belongs to the short-chain dehydrogenases/reductases (SDR) family. In terms of assembly, homotetramer (in vitro). Heterotetramer with HSD17B8; contains two molecules each of HSD17B8 and CBR4. Does not form homotetramers when HSD17B8 is coexpressed, only heterotetramers (in vitro).

The protein resides in the mitochondrion matrix. The catalysed reaction is a (3R)-hydroxyacyl-[ACP] + NADP(+) = a 3-oxoacyl-[ACP] + NADPH + H(+). It carries out the reaction a quinone + NADPH + H(+) = a quinol + NADP(+). It functions in the pathway lipid metabolism; fatty acid biosynthesis. Its function is as follows. Component of the heterotetramer complex KAR (3-ketoacyl-[acyl carrier protein] reductase or 3-ketoacyl-[ACP] reductase) that forms part of the mitochondrial fatty acid synthase (mtFAS). Beta-subunit of the KAR heterotetramer complex, responsible for the 3-ketoacyl-ACP reductase activity of the mtFAS, reduces 3-oxoacyl-[ACP] to (3R)-hydroxyacyl-[ACP] in a NADPH-dependent manner with no chain length preference, thereby participating in mitochondrial fatty acid biosynthesis. The homotetramer has NADPH-dependent quinone reductase activity (in vitro), hence could play a role in protection against cytotoxicity of exogenous quinones. As a heterotetramer, it can also reduce 9,10-phenanthrenequinone, 1,4-benzoquinone and various other o-quinones and p-quinones (in vitro). The sequence is that of 3-oxoacyl-[acyl-carrier-protein] reductase (Cbr4) from Mus musculus (Mouse).